The primary structure comprises 581 residues: Pyridine nucleotide-disulfide oxidoreductase domain-containing protein 2 (581 aa).

38 to 71 (VVIGAGHNGLVAAAYLQRLGVNTAVFERRHVIGG) is an FAD binding site.

It belongs to the carotenoid/retinoid oxidoreductase family. Interacts with COX5B; this interaction may contribute to localize PYROXD2 to the inner face of the inner mitochondrial membrane.

It localises to the mitochondrion matrix. Its function is as follows. Probable oxidoreductase that may play a role as regulator of mitochondrial function. In Mus musculus (Mouse), this protein is Pyridine nucleotide-disulfide oxidoreductase domain-containing protein 2.